A 51-amino-acid chain; its full sequence is ATP synthase F(1) complex subunit epsilon, mitochondrial (51 aa).

Residues Lys-21, Lys-32, and Lys-37 each carry the N6-acetyllysine; alternate modification. 3 positions are modified to N6-succinyllysine; alternate: Lys-21, Lys-32, and Lys-37. An N6-acetyllysine modification is found at Lys-44.

This sequence belongs to the eukaryotic ATPase epsilon family. Component of the ATP synthase complex composed at least of ATP5F1A/subunit alpha, ATP5F1B/subunit beta, ATP5MC1/subunit c (homooctomer), MT-ATP6/subunit a, MT-ATP8/subunit 8, ATP5ME/subunit e, ATP5MF/subunit f, ATP5MG/subunit g, ATP5MK/subunit k, ATP5MJ/subunit j, ATP5F1C/subunit gamma, ATP5F1D/subunit delta, ATP5F1E/subunit epsilon, ATP5PF/subunit F6, ATP5PB/subunit b, ATP5PD/subunit d, ATP5PO/subunit OSCP. ATP synthase complex consists of a soluble F(1) head domain (subunits alpha(3) and beta(3)) - the catalytic core - and a membrane F(0) domain - the membrane proton channel (subunits c, a, 8, e, f, g, k and j). These two domains are linked by a central stalk (subunits gamma, delta, and epsilon) rotating inside the F1 region and a stationary peripheral stalk (subunits F6, b, d, and OSCP). Ubiquitous.

Its subcellular location is the mitochondrion. It is found in the mitochondrion inner membrane. Subunit epsilon, of the mitochondrial membrane ATP synthase complex (F(1)F(0) ATP synthase or Complex V) that produces ATP from ADP in the presence of a proton gradient across the membrane which is generated by electron transport complexes of the respiratory chain. ATP synthase complex consist of a soluble F(1) head domain - the catalytic core - and a membrane F(1) domain - the membrane proton channel. These two domains are linked by a central stalk rotating inside the F(1) region and a stationary peripheral stalk. During catalysis, ATP synthesis in the catalytic domain of F(1) is coupled via a rotary mechanism of the central stalk subunits to proton translocation. In vivo, can only synthesize ATP although its ATP hydrolase activity can be activated artificially in vitro. May be essential for the assembly of F(1) and may play an important role in the incorporation of the hydrophobic subunit c into the F(1)-c oligomer rotor of the mitochondrial ATP synthase complex. The chain is ATP synthase F(1) complex subunit epsilon, mitochondrial from Homo sapiens (Human).